The primary structure comprises 153 residues: 3-hydroxyacyl-[acyl-carrier-protein] dehydratase FabZ (153 aa).

His-54 is an active-site residue.

It belongs to the thioester dehydratase family. FabZ subfamily.

The protein resides in the cytoplasm. It catalyses the reaction a (3R)-hydroxyacyl-[ACP] = a (2E)-enoyl-[ACP] + H2O. In terms of biological role, involved in unsaturated fatty acids biosynthesis. Catalyzes the dehydration of short chain beta-hydroxyacyl-ACPs and long chain saturated and unsaturated beta-hydroxyacyl-ACPs. This is 3-hydroxyacyl-[acyl-carrier-protein] dehydratase FabZ from Chlamydia trachomatis serovar L2 (strain ATCC VR-902B / DSM 19102 / 434/Bu).